Here is a 304-residue protein sequence, read N- to C-terminus: MIRQRTLKNTIRATGVGLHSGEKVYLTLKPAPVDTGIIFRRTDLDPMVEIRACAENVGETMLSTTLVKDGVRVATVEHLLSAMAGLGIDNCFVELSAAEVPIMDGSAGPFVFLLQSAGISEQEAAKRFIRIKREVTVEEGDKKATFLPFEGFKVSFGIDFDHPVFKGRAQTATVDFSSTSFVKEVSRARTFGFMRDIEKLRAMNLALGGSVDNAIVVDDYKILNEDGLRYDDEFVKHKVLDAIGDLYLLGNSLIGEFRGIKSGHDLNNKLLRKLRAEEDAWEVVTFDDEATAPISYMKPVLAAG.

Zn(2+) is bound by residues His78, His237, and Asp241. His264 functions as the Proton donor in the catalytic mechanism.

Belongs to the LpxC family. Zn(2+) serves as cofactor.

The enzyme catalyses a UDP-3-O-[(3R)-3-hydroxyacyl]-N-acetyl-alpha-D-glucosamine + H2O = a UDP-3-O-[(3R)-3-hydroxyacyl]-alpha-D-glucosamine + acetate. It participates in glycolipid biosynthesis; lipid IV(A) biosynthesis; lipid IV(A) from (3R)-3-hydroxytetradecanoyl-[acyl-carrier-protein] and UDP-N-acetyl-alpha-D-glucosamine: step 2/6. Functionally, catalyzes the hydrolysis of UDP-3-O-myristoyl-N-acetylglucosamine to form UDP-3-O-myristoylglucosamine and acetate, the committed step in lipid A biosynthesis. This chain is UDP-3-O-acyl-N-acetylglucosamine deacetylase, found in Marinobacter nauticus (strain ATCC 700491 / DSM 11845 / VT8) (Marinobacter aquaeolei).